Consider the following 393-residue polypeptide: Branched-chain-amino-acid aminotransferase, mitochondrial (393 aa).

The transit peptide at Met1 to Cys27 directs the protein to the mitochondrion. Residue Tyr169 coordinates substrate. N6-(pyridoxal phosphate)lysine is present on Lys230. At Lys322 the chain carries N6-acetyllysine.

This sequence belongs to the class-IV pyridoxal-phosphate-dependent aminotransferase family. Homodimer. Pyridoxal 5'-phosphate serves as cofactor.

It localises to the mitochondrion. It carries out the reaction L-leucine + 2-oxoglutarate = 4-methyl-2-oxopentanoate + L-glutamate. It catalyses the reaction L-isoleucine + 2-oxoglutarate = (S)-3-methyl-2-oxopentanoate + L-glutamate. The enzyme catalyses L-valine + 2-oxoglutarate = 3-methyl-2-oxobutanoate + L-glutamate. In terms of biological role, catalyzes the first reaction in the catabolism of the essential branched chain amino acids leucine, isoleucine, and valine. May also function as a transporter of branched chain alpha-keto acids. The sequence is that of Branched-chain-amino-acid aminotransferase, mitochondrial (Bcat2) from Mus musculus (Mouse).